Here is a 790-residue protein sequence, read N- to C-terminus: Cadherin-20 (790 aa).

Residues 1 to 25 (MSCKRSYHRHCALVYYMVLLDLTNA) form the signal peptide. Residues 26–52 (VFEFSHPLIRDSGNSQSRQLLHHRLKR) constitute a propeptide that is removed on maturation. The Extracellular segment spans residues 26–612 (VFEFSHPLIR…PYTLPISLSR (587 aa)). Cadherin domains lie at 54 to 158 (WVWN…EPKF), 159 to 267 (LDGP…PPRF), 268 to 382 (PQKH…PPVF), 383 to 487 (GSSF…APTF), and 487 to 605 (FTKF…EPYT). Residues Asn254, Asn283, Asn413, Asn454, and Asn535 are each glycosylated (N-linked (GlcNAc...) asparagine). Residues 613 to 633 (GALIAILTCIFVLLVLVLLIL) form a helical membrane-spanning segment. At 634–790 (SMRRHRKQPY…YGTKDNNGSL (157 aa)) the chain is on the cytoplasmic side.

Detected in embryonic posterior neural plate, embryonic neural tube, sulcus limitans and embryonic kidney.

Its subcellular location is the cell membrane. Functionally, cadherins are calcium-dependent cell adhesion proteins. They preferentially interact with themselves in a homophilic manner in connecting cells; cadherins may thus contribute to the sorting of heterogeneous cell types. This Xenopus laevis (African clawed frog) protein is Cadherin-20 (cdh20).